The primary structure comprises 328 residues: MQGSVTEFLKPRLVDIEQISSTHAKVILEPLERGFGHTLGNALRRILLSSMPGCAVTEVEIDGVLHEYSSKEGVQEDILEVLLNLKGLAVKVQNKDDVILTLNKSGIGPVVAADITYDGDVEIVNPDHVICHLTDENASISMRIRVQRGRGYVPASSRTHTQEERPIGRLLVDACYSPVERIAYNVEAARVEQRTDLDKLVIELETNGALEPEEAIRRAATILAEQLDAFVDLRDVRQPEIKEEKPEFXPILLRPVDDLELTVRSANCLKAETIHYIGDLVQRTEVELLKTPNLGKKSLTEIKDVLASRGLSLGMRLENWPPASIAED.

The segment at 1–234 (MQGSVTEFLK…EQLDAFVDLR (234 aa)) is alpha N-terminal domain (alpha-NTD). The interval 248–328 (FXPILLRPVD…NWPPASIAED (81 aa)) is alpha C-terminal domain (alpha-CTD).

This sequence belongs to the RNA polymerase alpha chain family. As to quaternary structure, homodimer. The RNAP catalytic core consists of 2 alpha, 1 beta, 1 beta' and 1 omega subunit. When a sigma factor is associated with the core the holoenzyme is formed, which can initiate transcription.

It catalyses the reaction RNA(n) + a ribonucleoside 5'-triphosphate = RNA(n+1) + diphosphate. Its function is as follows. DNA-dependent RNA polymerase catalyzes the transcription of DNA into RNA using the four ribonucleoside triphosphates as substrates. The protein is DNA-directed RNA polymerase subunit alpha of Haemophilus influenzae (strain ATCC 51907 / DSM 11121 / KW20 / Rd).